A 374-amino-acid polypeptide reads, in one-letter code: Probable carboxylesterase 4, mitochondrial (374 aa).

The N-terminal 52 residues, Met-1–Cys-52, are a transit peptide targeting the mitochondrion. Residues His-135–Gly-137 carry the Involved in the stabilization of the negatively charged intermediate by the formation of the oxyanion hole motif. Active-site residues include Ser-219, Asp-317, and His-349.

The protein belongs to the 'GDXG' lipolytic enzyme family. As to expression, expressed in leaves, stems, flowers and siliques.

The protein resides in the mitochondrion. The catalysed reaction is a carboxylic ester + H2O = an alcohol + a carboxylate + H(+). Carboxylesterase acting on esters with varying acyl chain length. This is Probable carboxylesterase 4, mitochondrial (CXE4) from Arabidopsis thaliana (Mouse-ear cress).